A 160-amino-acid chain; its full sequence is Cytochrome b6-f complex subunit 4 (160 aa).

A run of 3 helical transmembrane segments spans residues 36 to 56 (LLYI…GLAV), 95 to 115 (LLGV…PFLE), and 131 to 151 (TVFL…TLPI).

Belongs to the cytochrome b family. PetD subfamily. The 4 large subunits of the cytochrome b6-f complex are cytochrome b6, subunit IV (17 kDa polypeptide, petD), cytochrome f and the Rieske protein, while the 4 small subunits are petG, petL, petM and petN. The complex functions as a dimer.

The protein resides in the plastid. Its subcellular location is the chloroplast thylakoid membrane. Component of the cytochrome b6-f complex, which mediates electron transfer between photosystem II (PSII) and photosystem I (PSI), cyclic electron flow around PSI, and state transitions. The polypeptide is Cytochrome b6-f complex subunit 4 (Oryza sativa (Rice)).